Consider the following 423-residue polypeptide: UDP-N-acetylglucosamine 1-carboxyvinyltransferase 2 (423 aa).

Residue 23–24 (KN) coordinates phosphoenolpyruvate. R93 is a binding site for UDP-N-acetyl-alpha-D-glucosamine. C117 serves as the catalytic Proton donor. C117 carries the post-translational modification 2-(S-cysteinyl)pyruvic acid O-phosphothioketal. Residues 122-126 (RPIDQ), D305, and I327 each bind UDP-N-acetyl-alpha-D-glucosamine.

The protein belongs to the EPSP synthase family. MurA subfamily.

The protein localises to the cytoplasm. It carries out the reaction phosphoenolpyruvate + UDP-N-acetyl-alpha-D-glucosamine = UDP-N-acetyl-3-O-(1-carboxyvinyl)-alpha-D-glucosamine + phosphate. The protein operates within cell wall biogenesis; peptidoglycan biosynthesis. Cell wall formation. Adds enolpyruvyl to UDP-N-acetylglucosamine. This chain is UDP-N-acetylglucosamine 1-carboxyvinyltransferase 2, found in Listeria monocytogenes serovar 1/2a (strain ATCC BAA-679 / EGD-e).